Consider the following 586-residue polypeptide: Lamin-B1 (586 aa).

The disordered stretch occupies residues methionine 1–glutamine 31. Residue alanine 2 is modified to N-acetylalanine. The head stretch occupies residues alanine 2–glutamate 34. Phosphothreonine is present on residues threonine 3 and threonine 5. Arginine 14 bears the Omega-N-methylarginine mark. Threonine 20 carries the phosphothreonine modification. Serine 23 carries the phosphoserine modification. Phosphothreonine is present on threonine 25. The residue at position 28 (serine 28) is a Phosphoserine. Positions glutamate 32–leucine 388 constitute an IF rod domain. The segment at glutamate 35–glutamate 69 is coil 1A. The segment at valine 70–leucine 81 is linker 1. The interval tyrosine 82–glutamate 215 is coil 1B. Lysine 102 participates in a covalent cross-link: Glycyl lysine isopeptide (Lys-Gly) (interchain with G-Cter in SUMO2). Lysine 111 is modified (N6-acetyllysine). Residue lysine 123 forms a Glycyl lysine isopeptide (Lys-Gly) (interchain with G-Cter in SUMO2) linkage. A Phosphoserine modification is found at serine 126. A Glycyl lysine isopeptide (Lys-Gly) (interchain with G-Cter in SUMO2) cross-link involves residue lysine 145. Residue lysine 157 is modified to N6-acetyllysine; alternate. A Glycyl lysine isopeptide (Lys-Gly) (interchain with G-Cter in SUMO2); alternate cross-link involves residue lysine 157. Position 158 is a phosphoserine (serine 158). A Glycyl lysine isopeptide (Lys-Gly) (interchain with G-Cter in SUMO2) cross-link involves residue lysine 181. Serine 200, serine 210, and serine 232 each carry phosphoserine. The linker 2 stretch occupies residues isoleucine 216–alanine 243. Residues lysine 241 and lysine 261 each participate in a glycyl lysine isopeptide (Lys-Gly) (interchain with G-Cter in SUMO2) cross-link. The coil 2 stretch occupies residues glutamine 244–glutamate 386. Lysine 271 bears the N6-acetyllysine; alternate mark. A Glycyl lysine isopeptide (Lys-Gly) (interchain with G-Cter in SUMO2); alternate cross-link involves residue lysine 271. A phosphoserine mark is found at serine 278 and serine 302. Residue lysine 312 forms a Glycyl lysine isopeptide (Lys-Gly) (interchain with G-Cter in SUMO2) linkage. Lysine 330 bears the N6-acetyllysine; alternate mark. Residue lysine 330 forms a Glycyl lysine isopeptide (Lys-Gly) (interchain with G-Cter in SUMO2); alternate linkage. Phosphoserine occurs at positions 375 and 393. The segment at arginine 387–methionine 586 is tail. Residues leucine 388–isoleucine 432 are disordered. Residues leucine 390–valine 409 are compositionally biased toward low complexity. The O-linked (GlcNAc) threonine glycan is linked to threonine 399. Position 413 is an omega-N-methylarginine (arginine 413). The short motif at lysine 415–aspartate 420 is the Nuclear localization signal element. The 117-residue stretch at valine 430–phenylalanine 546 folds into the LTD domain. An N6-acetyllysine modification is found at lysine 483. A Glycyl lysine isopeptide (Lys-Gly) (interchain with G-Cter in SUMO2) cross-link involves residue lysine 532. Phosphoserine is present on serine 534. A Glycyl lysine isopeptide (Lys-Gly) (interchain with G-Cter in SUMO2) cross-link involves residue lysine 547. The residue at position 575 (threonine 575) is a Phosphothreonine. The residue at position 583 (cysteine 583) is a Cysteine methyl ester. A lipid anchor (S-farnesyl cysteine) is attached at cysteine 583. The propeptide at alanine 584 to methionine 586 is removed in mature form.

It belongs to the intermediate filament family. As to quaternary structure, homodimer. Lamin dimers then assemble into dimeric head-to-tail polymers. Ultimately, two head-to-tail polymers assemble laterally into a protofilament with a uniformly shaped rod of 3.5 nm in diameter. Interacts with SPAG4 and SEPT12. In terms of processing, B-type lamins undergo a series of modifications, such as farnesylation and phosphorylation. Increased phosphorylation of the lamins occurs before envelope disintegration and probably plays a role in regulating lamin associations. Phosphorylation plays a key role in lamin organization, subcellular localization and nuclear envelope disintegration. Phosphorylation by CDK1 at Ser-23 and Ser-393 at the onset of mitosis drives lamin disassembly and nuclear envelope breakdown.

It is found in the nucleus lamina. In terms of biological role, lamins are intermediate filament proteins that assemble into a filamentous meshwork, and which constitute the major components of the nuclear lamina, a fibrous layer on the nucleoplasmic side of the inner nuclear membrane. Lamins provide a framework for the nuclear envelope, bridging the nuclear envelope and chromatin, thereby playing an important role in nuclear assembly, chromatin organization, nuclear membrane and telomere dynamics. The structural integrity of the lamina is strictly controlled by the cell cycle, as seen by the disintegration and formation of the nuclear envelope in prophase and telophase, respectively. In Homo sapiens (Human), this protein is Lamin-B1 (LMNB1).